The sequence spans 360 residues: Peptide chain release factor 1 (360 aa).

An N5-methylglutamine modification is found at Q235.

This sequence belongs to the prokaryotic/mitochondrial release factor family. Methylated by PrmC. Methylation increases the termination efficiency of RF1.

The protein resides in the cytoplasm. Its function is as follows. Peptide chain release factor 1 directs the termination of translation in response to the peptide chain termination codons UAG and UAA. The protein is Peptide chain release factor 1 of Delftia acidovorans (strain DSM 14801 / SPH-1).